A 763-amino-acid chain; its full sequence is Cyclin-F (763 aa).

The Nuclear localization signal 1 signature appears at 19–27 (KRRVKRRPR). The F-box domain occupies 28-75 (VLTLLSLPEDVLLYVLECLPAVDILSMREVHPHLRSLVDSHSSVWARA). In terms of domain architecture, Cyclin N-terminal spans 299–411 (INKTSIFTTQ…EIISALEGKI (113 aa)). 2 short sequence motifs (d box) span residues 316 to 319 (RYIL) and 355 to 358 (RAKL). 2 disordered regions span residues 574–600 (GSKTKRRREDSIQEDRGSFVTTPTAEL) and 677–763 (KLEN…SDEL). Residues 575–581 (SKTKRRR) carry the Nuclear localization signal 2 motif. The span at 580-590 (RREDSIQEDRG) shows a compositional bias: basic and acidic residues. The PEST stretch occupies residues 589–747 (RGSFVTTPTA…LFKASRRQVK (159 aa)). The span at 692–710 (SSGYSSVSSGGSPTSSSSP) shows a compositional bias: low complexity. Positions 741–751 (ASRRQVKRKNQ) are enriched in basic residues.

Belongs to the cyclin family. Cyclin AB subfamily. Component of the SCF(CCNF) complex.

The protein resides in the nucleus. Its subcellular location is the cytoplasm. The protein localises to the perinuclear region. It localises to the cytoskeleton. It is found in the microtubule organizing center. The protein resides in the centrosome. Its subcellular location is the centriole. Functionally, substrate recognition component of the SCF(CCNF) E3 ubiquitin-protein ligase complex which mediates the ubiquitination and subsequent proteasomal degradation of target proteins. The SCF(CCNF) E3 ubiquitin-protein ligase complex is an integral component of the ubiquitin proteasome system (UPS) and links proteasome degradation to the cell cycle. Mediates the substrate recognition and the proteasomal degradation of various target proteins during G2 phase involved in the regulation of cell cycle progression and in the maintenance of genome stability. In Xenopus tropicalis (Western clawed frog), this protein is Cyclin-F (ccnf).